A 349-amino-acid polypeptide reads, in one-letter code: Sphingolipid C4-hydroxylase SUR2 (349 aa).

A run of 5 helical transmembrane segments spans residues 9-29 (AAGSFPLAFGLKTSFGFMHYA), 50-70 (VLALVAPVVAYWALSGIFHVI), 99-119 (FLEVILQHIIQTIVGLIFMHF), 148-168 (IYYGYMYGMSALKIFAGFLFV), and 209-229 (PVEGFLLDTLGTGIAMTLTHL). Residues 162-297 (FAGFLFVDTW…FTFWDNLFQT (136 aa)) enclose the Fatty acid hydroxylase domain.

It belongs to the sterol desaturase family.

Its subcellular location is the endoplasmic reticulum membrane. It catalyses the reaction sphinganine + 2 Fe(II)-[cytochrome b5] + O2 + 2 H(+) = (4R)-hydroxysphinganine + 2 Fe(III)-[cytochrome b5] + H2O. It carries out the reaction an N-acylsphinganine + 2 Fe(II)-[cytochrome b5] + O2 + 2 H(+) = an N-acyl-(4R)-4-hydroxysphinganine + 2 Fe(III)-[cytochrome b5] + H2O. The enzyme catalyses an N-acyleicosasphinganine + 2 Fe(II)-[cytochrome b5] + O2 + 2 H(+) = N-acyl-4-hydroxyeicosasphinganine + 2 Fe(III)-[cytochrome b5] + H2O. It functions in the pathway membrane lipid metabolism; sphingolipid biosynthesis. In terms of biological role, required for hydroxylation of C-4 in the sphingoid moiety of ceramide. Catalyzes the conversion of sphinganine to phytosphingosine in sphingolipid biosynthesis. Involved in the response to syringomycin. The sequence is that of Sphingolipid C4-hydroxylase SUR2 (SUR2) from Saccharomyces cerevisiae (strain ATCC 204508 / S288c) (Baker's yeast).